A 156-amino-acid polypeptide reads, in one-letter code: Small ribosomal subunit protein uS7 (156 aa).

The protein belongs to the universal ribosomal protein uS7 family. Part of the 30S ribosomal subunit. Contacts proteins S9 and S11.

One of the primary rRNA binding proteins, it binds directly to 16S rRNA where it nucleates assembly of the head domain of the 30S subunit. Is located at the subunit interface close to the decoding center, probably blocks exit of the E-site tRNA. The protein is Small ribosomal subunit protein uS7 of Alkaliphilus oremlandii (strain OhILAs) (Clostridium oremlandii (strain OhILAs)).